The following is a 253-amino-acid chain: Decarboxylase DEC1 (253 aa).

Residue K121 is the Schiff-base intermediate with acetoacetate of the active site.

This sequence belongs to the ADC family.

The protein operates within mycotoxin biosynthesis. Decarboxylase; part of the Tox1B locus, one of the 2 loci that mediate the biosynthesis of T-toxin, a family of linear polyketides 37 to 45 carbons in length, of which the major component is 41 carbons, and which leads to high virulence to maize. One of the PKSs (PKS1 or PKS2) could synthesize a precursor, used subsequently by the other PKS as starter unit, to add additional carbons. Variability in the length of the final carbon backbone C35-47 could be achieved by varying the number of condensation cycles, or use of different starter or extender units or might be due to decarboxylation of the penultimate product, catalyzed by DEC1. Additional proteins are required for the biosynthesis of T-toxin, including oxidoreductases RED1, RED2, RED3, LAM1 and OXI1, as well as esterase TOX9. This Cochliobolus heterostrophus (strain C4 / ATCC 48331 / race T) (Southern corn leaf blight fungus) protein is Decarboxylase DEC1.